The chain runs to 485 residues: Aspartyl/glutamyl-tRNA(Asn/Gln) amidotransferase subunit B (485 aa).

It belongs to the GatB/GatE family. GatB subfamily. Heterotrimer of A, B and C subunits.

It carries out the reaction L-glutamyl-tRNA(Gln) + L-glutamine + ATP + H2O = L-glutaminyl-tRNA(Gln) + L-glutamate + ADP + phosphate + H(+). The catalysed reaction is L-aspartyl-tRNA(Asn) + L-glutamine + ATP + H2O = L-asparaginyl-tRNA(Asn) + L-glutamate + ADP + phosphate + 2 H(+). Functionally, allows the formation of correctly charged Asn-tRNA(Asn) or Gln-tRNA(Gln) through the transamidation of misacylated Asp-tRNA(Asn) or Glu-tRNA(Gln) in organisms which lack either or both of asparaginyl-tRNA or glutaminyl-tRNA synthetases. The reaction takes place in the presence of glutamine and ATP through an activated phospho-Asp-tRNA(Asn) or phospho-Glu-tRNA(Gln). In Paramagnetospirillum magneticum (strain ATCC 700264 / AMB-1) (Magnetospirillum magneticum), this protein is Aspartyl/glutamyl-tRNA(Asn/Gln) amidotransferase subunit B.